An 86-amino-acid chain; its full sequence is Exopolysaccharide production repressor protein (86 aa).

The chain crosses the membrane as a helical span at residues 18–38 (FAVTLAASVFLQVVYFLSLLF). Residues 44 to 86 (TRESDRSIHSGTRQADQPQKRDRDKTEQSNVPKLDPRRKRRTP) are disordered. Positions 61 to 70 (PQKRDRDKTE) are enriched in basic and acidic residues.

It is found in the cell membrane. It functions in the pathway glycan metabolism; exopolysaccharide biosynthesis. Its function is as follows. Inhibition of exopolysaccharide synthesis (EPS) and nodulation ability (NOD). This chain is Exopolysaccharide production repressor protein (exoX), found in Rhizobium leguminosarum bv. phaseoli.